The following is a 530-amino-acid chain: UPF0422 protein lpg2959 (530 aa).

Residues 1–19 form the signal peptide; the sequence is MKFKKIILALACLSSPLYA. A coiled-coil region spans residues 20–66; it reads DQDQQLKSEIQRLQHQAEDLQAQLNRLQKQLANHKSSQQKHEQQAAA. The interval 50–81 is disordered; that stretch reads LANHKSSQQKHEQQAAAKPAEPQSKPTVKSGA. Positions 63-75 are enriched in low complexity; that stretch reads QAAAKPAEPQSKP.

It belongs to the UPF0422 family.

The sequence is that of UPF0422 protein lpg2959 from Legionella pneumophila subsp. pneumophila (strain Philadelphia 1 / ATCC 33152 / DSM 7513).